Here is a 653-residue protein sequence, read N- to C-terminus: MAKIHELSENLTNQIAAGEVIERPASVVKELVENAIDAQASRIRVEVQHSGLKQISVQDNGSGIAPDQVDLAFMRHATSKIQDEHDLFNIATLGFRGEALASIAAVAHVEILTSTGGQTATRAAFAGGVKKFQEDAGSAKGTKITVGDIFYNTPARLKYLKSPKTELLKIVDIVNRIALGHPEISLTLASDGKVLLRTPGNGNLKQDVANIYGRKVAEKMLTVENEDPDFTLYGLVSEANLTRSSRNFISILLNGRYIKNYQLSSALLDGYGNKLGGKYPIAVLAIEADPLLVDVNVHPTKEEVRLSKEKELSRLITSAVTEALMDEDEASPLFQLTPFKDKTQLDQLEFNLKPNVVDTRRPDDFQLEVSQVAEPEGKTDITNKKETETKEKAEKKENKQEEKEEKTSAPEYVDLNQVREDDQYVLTKSWDQHVKEQTALPPFAGGEEAASPVTSKADQLLRQHLPALRLLGQMGGYLLAEHEGDLYLIDQVAARRRLEYDQILASLEKDENYQQGLLEPLVFDFSVYDYQKLKDQLPLLRQLGLEMEDFGQNTLLMHSYPTWLKGEVTVQVRELLDQLLSSRENDGKSLLKLVAAKAAESNVSRRVNLTGAEAADLLLRLQTASDPYRDASGQLAVVRLSQNDLSKLFKKGK.

A disordered region spans residues E368 to V413. The span at P375 to S408 shows a compositional bias: basic and acidic residues.

Belongs to the DNA mismatch repair MutL/HexB family.

Its function is as follows. This protein is involved in the repair of mismatches in DNA. It is required for dam-dependent methyl-directed DNA mismatch repair. May act as a 'molecular matchmaker', a protein that promotes the formation of a stable complex between two or more DNA-binding proteins in an ATP-dependent manner without itself being part of a final effector complex. The chain is DNA mismatch repair protein MutL from Lactobacillus delbrueckii subsp. bulgaricus (strain ATCC 11842 / DSM 20081 / BCRC 10696 / JCM 1002 / NBRC 13953 / NCIMB 11778 / NCTC 12712 / WDCM 00102 / Lb 14).